Consider the following 275-residue polypeptide: 4-diphosphocytidyl-2-C-methyl-D-erythritol kinase (275 aa).

Residue K14 is part of the active site. 98 to 108 (PMGAGLGGGSS) serves as a coordination point for ATP. D140 is a catalytic residue.

The protein belongs to the GHMP kinase family. IspE subfamily.

It catalyses the reaction 4-CDP-2-C-methyl-D-erythritol + ATP = 4-CDP-2-C-methyl-D-erythritol 2-phosphate + ADP + H(+). Its pathway is isoprenoid biosynthesis; isopentenyl diphosphate biosynthesis via DXP pathway; isopentenyl diphosphate from 1-deoxy-D-xylulose 5-phosphate: step 3/6. Functionally, catalyzes the phosphorylation of the position 2 hydroxy group of 4-diphosphocytidyl-2C-methyl-D-erythritol. In Francisella tularensis subsp. novicida (strain U112), this protein is 4-diphosphocytidyl-2-C-methyl-D-erythritol kinase.